The primary structure comprises 329 residues: Vomeronasal type-1 receptor 42 (329 aa).

The Extracellular portion of the chain corresponds to 1–32; it reads MGDILFSSPQSMFSHTMNKNSILHTHSIIGKT. A helical membrane pass occupies residues 33-53; sequence FFSEIGIGISGNSFLLLVHIL. Topologically, residues 54–65 are cytoplasmic; sequence KFIRGHRPRLTD. Residues 66-86 form a helical membrane-spanning segment; sequence LPIGLLSLIHLLMLLVAAFIA. At 87–109 the chain is on the extracellular side; sequence TDIFISRRGWDDIICKFLVYLYR. C101 and C188 are oxidised to a cystine. A helical transmembrane segment spans residues 110 to 130; the sequence is VLRGFSLCTTSMLSILQAIIL. At 131–150 the chain is on the cytoplasmic side; that stretch reads SPRSSCLAKFKHISPHHISG. A helical membrane pass occupies residues 151 to 171; that stretch reads AILFLSVLYMLIGSQLLVSII. The Extracellular portion of the chain corresponds to 172 to 209; sequence ATPNLTMNDFIYVTQSCSILPLSYLMQSIYSTLLAIRE. Residue N175 is glycosylated (N-linked (GlcNAc...) asparagine). A helical transmembrane segment spans residues 210–230; the sequence is FFLISLMVLSNWYMVALLSMH. At 231–254 the chain is on the cytoplasmic side; it reads RKQTQHLHGTNLSPKKSPEQSATQ. A helical membrane pass occupies residues 255 to 275; sequence TILMLISFFLLMTIYDTIVSC. The Extracellular segment spans residues 276-285; it reads SRTMFLNDPT. A helical membrane pass occupies residues 286-306; the sequence is SYSIELFIMHIYATVSPFVFM. At 307–329 the chain is on the cytoplasmic side; it reads STEKHIVNFLRSLGKRVINFNLH.

This sequence belongs to the G-protein coupled receptor 1 family.

The protein localises to the cell membrane. In terms of biological role, putative pheromone receptor implicated in the regulation of social and reproductive behavior. The sequence is that of Vomeronasal type-1 receptor 42 (Vmn1r42) from Mus musculus (Mouse).